The following is a 219-amino-acid chain: 7-cyano-7-deazaguanine synthase (219 aa).

9–19 (YSGGMDSFTVL) contacts ATP. The Zn(2+) site is built by Cys185, Cys193, Cys196, and Cys199.

Belongs to the QueC family. It depends on Zn(2+) as a cofactor.

The enzyme catalyses 7-carboxy-7-deazaguanine + NH4(+) + ATP = 7-cyano-7-deazaguanine + ADP + phosphate + H2O + H(+). Its pathway is purine metabolism; 7-cyano-7-deazaguanine biosynthesis. Its function is as follows. Catalyzes the ATP-dependent conversion of 7-carboxy-7-deazaguanine (CDG) to 7-cyano-7-deazaguanine (preQ(0)). In Marinomonas sp. (strain MWYL1), this protein is 7-cyano-7-deazaguanine synthase.